An 84-amino-acid chain; its full sequence is Cell division topological specificity factor (84 aa).

Belongs to the MinE family.

In terms of biological role, prevents the cell division inhibition by proteins MinC and MinD at internal division sites while permitting inhibition at polar sites. This ensures cell division at the proper site by restricting the formation of a division septum at the midpoint of the long axis of the cell. This Pseudomonas fluorescens (strain Pf0-1) protein is Cell division topological specificity factor.